Here is an 89-residue protein sequence, read N- to C-terminus: Small ribosomal subunit protein uS15 (89 aa).

This sequence belongs to the universal ribosomal protein uS15 family. As to quaternary structure, part of the 30S ribosomal subunit. Forms a bridge to the 50S subunit in the 70S ribosome, contacting the 23S rRNA.

In terms of biological role, one of the primary rRNA binding proteins, it binds directly to 16S rRNA where it helps nucleate assembly of the platform of the 30S subunit by binding and bridging several RNA helices of the 16S rRNA. Its function is as follows. Forms an intersubunit bridge (bridge B4) with the 23S rRNA of the 50S subunit in the ribosome. This is Small ribosomal subunit protein uS15 from Pseudomonas aeruginosa (strain LESB58).